A 239-amino-acid polypeptide reads, in one-letter code: Small ribosomal subunit protein uS2 (239 aa).

It belongs to the universal ribosomal protein uS2 family.

The chain is Small ribosomal subunit protein uS2 from Prochlorococcus marinus (strain MIT 9313).